The primary structure comprises 1381 residues: DNA-directed RNA polymerase subunit beta (1381 aa).

It belongs to the RNA polymerase beta chain family. The RNAP catalytic core consists of 2 alpha, 1 beta, 1 beta' and 1 omega subunit. When a sigma factor is associated with the core the holoenzyme is formed, which can initiate transcription.

It catalyses the reaction RNA(n) + a ribonucleoside 5'-triphosphate = RNA(n+1) + diphosphate. In terms of biological role, DNA-dependent RNA polymerase catalyzes the transcription of DNA into RNA using the four ribonucleoside triphosphates as substrates. In Sulfurimonas denitrificans (strain ATCC 33889 / DSM 1251) (Thiomicrospira denitrificans (strain ATCC 33889 / DSM 1251)), this protein is DNA-directed RNA polymerase subunit beta.